A 238-amino-acid chain; its full sequence is MRPAGRSNNQVRPVTLTRNYTKHAEGSVLVEFGDTKVLCTASIEEGVPRFLKGQGQGWITAEYGMLPRSTHTRNAREAAKGKQGGRTMEIQRLIARALRAAVDLKALGEFTITLDCDVLQADGGTRTASITGACVALADALQKLVENGKLKTNPMKGMVAAVSVGIVNGEAVCDLEYVEDSAAETDMNVVMTEDGRIIEVQGTAEGEPFTHEELLTLLALARGGIESIVVTQKAALAN.

Phosphate is bound by residues Arg86 and 124–126 (GTR).

It belongs to the RNase PH family. As to quaternary structure, homohexameric ring arranged as a trimer of dimers.

It catalyses the reaction tRNA(n+1) + phosphate = tRNA(n) + a ribonucleoside 5'-diphosphate. Functionally, phosphorolytic 3'-5' exoribonuclease that plays an important role in tRNA 3'-end maturation. Removes nucleotide residues following the 3'-CCA terminus of tRNAs; can also add nucleotides to the ends of RNA molecules by using nucleoside diphosphates as substrates, but this may not be physiologically important. Probably plays a role in initiation of 16S rRNA degradation (leading to ribosome degradation) during starvation. The protein is Ribonuclease PH of Escherichia coli O6:K15:H31 (strain 536 / UPEC).